Here is a 320-residue protein sequence, read N- to C-terminus: MIKKIGVLTSGGDAPGMNAAIRGVVRAALTEGLEVFGVYDGYLGLYEDRMVQLDRYSVSDMINRGGTFLGSARFPEFRDEHVREVAIENMKKRGLDALVVIGGDGSYMGAKRLTEMGFPCIGLPGTIDNDIKGTDYTIGFFTALGTVVEAIDRLRDTSSSHQRISIVEVMGRYCGDLTLAAAIAGGCEFIVVPEVEFSREDLVAEIKAGIAKGKKHAIVAITEHICDVDELAKYIEAETKRETRATVLGHIQRGGSPGPYDRILASRMGAYAIDLLLQGHGGRCVGIQNEKLVHHDIIDAIENMKRPFKGDWLDCAKKLY.

G12 is an ATP binding site. Residues 22 to 26 and 55 to 60 each bind ADP; these read RGVVR and RYSVSD. ATP contacts are provided by residues 73 to 74 and 103 to 106; these read RF and GDGS. Residue D104 coordinates Mg(2+). 126–128 provides a ligand contact to substrate; the sequence is TID. The Proton acceptor role is filled by D128. R155 contacts ADP. Substrate-binding positions include R163 and 170-172; that span reads MGR. Residues 186–188, K212, and 214–216 each bind ADP; these read GCE and KKH. Residues E223, R244, and 250–253 contribute to the substrate site; that span reads HIQR.

This sequence belongs to the phosphofructokinase type A (PFKA) family. ATP-dependent PFK group I subfamily. Prokaryotic clade 'B1' sub-subfamily. As to quaternary structure, homotetramer. The cofactor is Mg(2+).

It localises to the cytoplasm. It catalyses the reaction beta-D-fructose 6-phosphate + ATP = beta-D-fructose 1,6-bisphosphate + ADP + H(+). The protein operates within carbohydrate degradation; glycolysis; D-glyceraldehyde 3-phosphate and glycerone phosphate from D-glucose: step 3/4. With respect to regulation, allosterically activated by ADP and other diphosphonucleosides, and allosterically inhibited by phosphoenolpyruvate. In terms of biological role, catalyzes the phosphorylation of D-fructose 6-phosphate to fructose 1,6-bisphosphate by ATP, the first committing step of glycolysis. The protein is ATP-dependent 6-phosphofructokinase of Enterobacter cloacae.